Consider the following 357-residue polypeptide: Peptide chain release factor 1 (357 aa).

Gln232 is modified (N5-methylglutamine). A compositionally biased stretch (basic and acidic residues) spans 282 to 291 (KQRAEQEAAR). Residues 282-302 (KQRAEQEAARRSQVGTGDRSE) form a disordered region.

Belongs to the prokaryotic/mitochondrial release factor family. Methylated by PrmC. Methylation increases the termination efficiency of RF1.

The protein resides in the cytoplasm. Peptide chain release factor 1 directs the termination of translation in response to the peptide chain termination codons UAG and UAA. The chain is Peptide chain release factor 1 from Solidesulfovibrio magneticus (strain ATCC 700980 / DSM 13731 / RS-1) (Desulfovibrio magneticus).